A 193-amino-acid polypeptide reads, in one-letter code: Superoxide dismutase [Fe] (193 aa).

Position 27 (His-27) interacts with Fe cation. Lys-51 is modified (N6-acetyllysine). Residues His-74, Asp-157, and His-161 each coordinate Fe cation.

Belongs to the iron/manganese superoxide dismutase family. As to quaternary structure, homodimer. Fe cation serves as cofactor.

It carries out the reaction 2 superoxide + 2 H(+) = H2O2 + O2. Destroys superoxide anion radicals which are normally produced within the cells and which are toxic to biological systems. This chain is Superoxide dismutase [Fe] (sodB), found in Escherichia coli O157:H7.